The primary structure comprises 72 residues: MPKEEVLEFPGVVTELLPNAMFRVKLENDHEIIAHTAGRMRKNRIRVLTGDKVLVEMTPYDLTKGRITYRFK.

One can recognise an S1-like domain in the interval 1–72 (MPKEEVLEFP…TKGRITYRFK (72 aa)).

This sequence belongs to the IF-1 family. In terms of assembly, component of the 30S ribosomal translation pre-initiation complex which assembles on the 30S ribosome in the order IF-2 and IF-3, IF-1 and N-formylmethionyl-tRNA(fMet); mRNA recruitment can occur at any time during PIC assembly.

It localises to the cytoplasm. In terms of biological role, one of the essential components for the initiation of protein synthesis. Stabilizes the binding of IF-2 and IF-3 on the 30S subunit to which N-formylmethionyl-tRNA(fMet) subsequently binds. Helps modulate mRNA selection, yielding the 30S pre-initiation complex (PIC). Upon addition of the 50S ribosomal subunit IF-1, IF-2 and IF-3 are released leaving the mature 70S translation initiation complex. The sequence is that of Translation initiation factor IF-1 from Chelativorans sp. (strain BNC1).